Here is a 345-residue protein sequence, read N- to C-terminus: Probable S-adenosylmethionine carrier 2, chloroplastic (345 aa).

The transit peptide at 1–31 directs the protein to the chloroplast; sequence MTKALSGFCCSLSLSTLVRSSSSHMDSDIVS. 3 Solcar repeats span residues 76–148, 157–239, and 252–334; these read RVLY…TKQK, LSAV…LRIG, and ENAM…TKQI. A run of 5 helical transmembrane segments spans residues 82–102, 121–141, 156–176, 254–274, and 309–329; these read LITGGLAGVVVEAALYPIDTI, YSGLGGNLVGVLPASALFFGV, NLSAVAHLAAGALGGAVSSIV, AMIGAFAGAVTGVLTTPLDVI, and GMGPRVLWIGIGGSIFFGVLE.

The protein belongs to the mitochondrial carrier (TC 2.A.29) family. Expressed at low levels in seedlings, leaves, flowers, stems and roots.

It localises to the plastid. The protein resides in the chloroplast membrane. In terms of biological role, probable S-adenosylmethionine (SAM) transporter able to catalyze both uniport and exchange reactions through membranes. The chain is Probable S-adenosylmethionine carrier 2, chloroplastic (SAMC2) from Arabidopsis thaliana (Mouse-ear cress).